Here is a 337-residue protein sequence, read N- to C-terminus: Lipoyl synthase (337 aa).

[4Fe-4S] cluster contacts are provided by Cys-81, Cys-86, Cys-92, Cys-107, Cys-111, Cys-114, and Ser-323. Residues 93–312 enclose the Radical SAM core domain; the sequence is FSHGTATFMI…EEYGNALGFS (220 aa).

Belongs to the radical SAM superfamily. Lipoyl synthase family. [4Fe-4S] cluster is required as a cofactor.

The protein localises to the cytoplasm. The catalysed reaction is [[Fe-S] cluster scaffold protein carrying a second [4Fe-4S](2+) cluster] + N(6)-octanoyl-L-lysyl-[protein] + 2 oxidized [2Fe-2S]-[ferredoxin] + 2 S-adenosyl-L-methionine + 4 H(+) = [[Fe-S] cluster scaffold protein] + N(6)-[(R)-dihydrolipoyl]-L-lysyl-[protein] + 4 Fe(3+) + 2 hydrogen sulfide + 2 5'-deoxyadenosine + 2 L-methionine + 2 reduced [2Fe-2S]-[ferredoxin]. It participates in protein modification; protein lipoylation via endogenous pathway; protein N(6)-(lipoyl)lysine from octanoyl-[acyl-carrier-protein]: step 2/2. In terms of biological role, catalyzes the radical-mediated insertion of two sulfur atoms into the C-6 and C-8 positions of the octanoyl moiety bound to the lipoyl domains of lipoate-dependent enzymes, thereby converting the octanoylated domains into lipoylated derivatives. The sequence is that of Lipoyl synthase from Xanthomonas oryzae pv. oryzae (strain MAFF 311018).